A 170-amino-acid polypeptide reads, in one-letter code: Photosystem II extrinsic protein V (170 aa).

An N-terminal signal peptide occupies residues 1 to 33 (MASLFASLGRSLIKLLIVLPVIIGLSISSPAMA). Heme c is bound by residues C70, C73, H74, and H125.

It belongs to the cytochrome c family. PsbV subfamily. As to quaternary structure, PSII is composed of 1 copy each of membrane proteins PsbA, PsbB, PsbC, PsbD, PsbE, PsbF, PsbH, PsbI, PsbJ, PsbK, PsbL, PsbM, PsbT, PsbX, PsbY, Psb30/Ycf12, peripheral proteins PsbO, CyanoQ (PsbQ), PsbU, PsbV and a large number of cofactors. It forms dimeric complexes. Requires heme c as cofactor.

It is found in the cellular thylakoid membrane. One of the extrinsic, lumenal subunits of photosystem II (PSII). PSII is a light-driven water plastoquinone oxidoreductase, using light energy to abstract electrons from H(2)O, generating a proton gradient subsequently used for ATP formation. The extrinsic proteins stabilize the structure of photosystem II oxygen-evolving complex (OEC), the ion environment of oxygen evolution and protect the OEC against heat-induced inactivation. Low-potential cytochrome c that plays a role in the OEC of PSII. This chain is Photosystem II extrinsic protein V, found in Prochlorococcus marinus (strain MIT 9303).